A 524-amino-acid polypeptide reads, in one-letter code: Putative ATP-dependent RNA helicase R458 (524 aa).

Residues 125 to 338 (VPELIQRKDT…NSYFRKYSPI (214 aa)) enclose the Helicase ATP-binding domain. ATP is bound at residue 138 to 145 (FKSGTGKT). The short motif at 268-271 (DEFD) is the DEFD box element. Residues 373–524 (IILDLLKQCR…QLPGDLSTLL (152 aa)) form the Helicase C-terminal domain.

It belongs to the DEAD box helicase family. eIF4A subfamily.

It carries out the reaction ATP + H2O = ADP + phosphate + H(+). Putative ATP-dependent RNA helicase. This chain is Putative ATP-dependent RNA helicase R458, found in Acanthamoeba polyphaga mimivirus (APMV).